A 261-amino-acid chain; its full sequence is tRNA pseudouridine synthase A (261 aa).

Aspartate 51 acts as the Nucleophile in catalysis. Tyrosine 109 contributes to the substrate binding site.

The protein belongs to the tRNA pseudouridine synthase TruA family. In terms of assembly, homodimer.

It catalyses the reaction uridine(38/39/40) in tRNA = pseudouridine(38/39/40) in tRNA. Formation of pseudouridine at positions 38, 39 and 40 in the anticodon stem and loop of transfer RNAs. This chain is tRNA pseudouridine synthase A, found in Photobacterium profundum (strain SS9).